Here is a 338-residue protein sequence, read N- to C-terminus: RNA 3'-terminal phosphate cyclase (338 aa).

ATP-binding positions include Gln-103 and 283-287 (YLADQ). Catalysis depends on His-308, which acts as the Tele-AMP-histidine intermediate.

It belongs to the RNA 3'-terminal cyclase family. Type 1 subfamily.

The protein localises to the cytoplasm. It catalyses the reaction a 3'-end 3'-phospho-ribonucleotide-RNA + ATP = a 3'-end 2',3'-cyclophospho-ribonucleotide-RNA + AMP + diphosphate. In terms of biological role, catalyzes the conversion of 3'-phosphate to a 2',3'-cyclic phosphodiester at the end of RNA. The mechanism of action of the enzyme occurs in 3 steps: (A) adenylation of the enzyme by ATP; (B) transfer of adenylate to an RNA-N3'P to produce RNA-N3'PP5'A; (C) and attack of the adjacent 2'-hydroxyl on the 3'-phosphorus in the diester linkage to produce the cyclic end product. The biological role of this enzyme is unknown but it is likely to function in some aspects of cellular RNA processing. In Escherichia coli O6:K15:H31 (strain 536 / UPEC), this protein is RNA 3'-terminal phosphate cyclase.